A 551-amino-acid polypeptide reads, in one-letter code: Malate synthase, glyoxysomal (551 aa).

Residue arginine 174 is the Proton acceptor of the active site. The active-site Proton donor is the aspartate 458.

This sequence belongs to the malate synthase family.

The protein localises to the glyoxysome. It carries out the reaction glyoxylate + acetyl-CoA + H2O = (S)-malate + CoA + H(+). It functions in the pathway carbohydrate metabolism; glyoxylate cycle; (S)-malate from isocitrate: step 2/2. In Candida tropicalis (Yeast), this protein is Malate synthase, glyoxysomal (PMS1).